Consider the following 332-residue polypeptide: 5,10-methylenetetrahydromethanopterin reductase (332 aa).

This sequence belongs to the mer family.

It localises to the cytoplasm. The catalysed reaction is 5-methyl-5,6,7,8-tetrahydromethanopterin + oxidized coenzyme F420-(gamma-L-Glu)(n) + H(+) = 5,10-methylenetetrahydromethanopterin + reduced coenzyme F420-(gamma-L-Glu)(n). Its pathway is metabolic intermediate metabolism; lactate oxidation. Its function is as follows. Catalyzes the oxidation of methyl-H(4)MPT to methylene-H(4)MPT. The sequence is that of 5,10-methylenetetrahydromethanopterin reductase from Archaeoglobus fulgidus (strain ATCC 49558 / DSM 4304 / JCM 9628 / NBRC 100126 / VC-16).